Reading from the N-terminus, the 481-residue chain is Probable myosin light chain kinase DDB_G0284661 (481 aa).

The Protein kinase domain occupies 13-269 (YNITDIIGEG…VKQSLAHKWI (257 aa)). Residues 19 to 27 (IGEGTFSTV) and Lys-43 contribute to the ATP site. The Proton acceptor role is filled by Asp-136. Disordered regions lie at residues 285-315 (PLIT…PSLK) and 345-427 (SNSH…DDDE). Over residues 379-421 (SNNNINNNNDNNDNNNSNSNNSNNNINNFINNNNNNNNNNSNF) the composition is skewed to low complexity.

This sequence belongs to the protein kinase superfamily. CAMK Ser/Thr protein kinase family. CaMK subfamily.

The enzyme catalyses L-seryl-[myosin light chain] + ATP = O-phospho-L-seryl-[myosin light chain] + ADP + H(+). The catalysed reaction is L-threonyl-[myosin light chain] + ATP = O-phospho-L-threonyl-[myosin light chain] + ADP + H(+). With respect to regulation, does not have a calmodulin-binding domain. In terms of biological role, may phosphorylate a specific serine in the N-terminus of a myosin light chain. This is Probable myosin light chain kinase DDB_G0284661 from Dictyostelium discoideum (Social amoeba).